Consider the following 343-residue polypeptide: D-alanine--D-alanine ligase (343 aa).

The ATP-grasp domain occupies 129 to 335 (KYVLEHFNIK…YSKLIDELIE (207 aa)). Residue 162–217 (ENKLGYAVFIKPSNSGSSVGITKAHNRKELEAGLEEAMKYDRKILVEEALNAREIE) coordinates ATP. Aspartate 288, glutamate 302, and asparagine 304 together coordinate Mg(2+).

It belongs to the D-alanine--D-alanine ligase family. Requires Mg(2+) as cofactor. The cofactor is Mn(2+).

It localises to the cytoplasm. The enzyme catalyses 2 D-alanine + ATP = D-alanyl-D-alanine + ADP + phosphate + H(+). Its pathway is cell wall biogenesis; peptidoglycan biosynthesis. Cell wall formation. The polypeptide is D-alanine--D-alanine ligase (Clostridium acetobutylicum (strain ATCC 824 / DSM 792 / JCM 1419 / IAM 19013 / LMG 5710 / NBRC 13948 / NRRL B-527 / VKM B-1787 / 2291 / W)).